The following is a 184-amino-acid chain: U3 small nucleolar ribonucleoprotein protein IMP3 (184 aa).

One can recognise an S4 RNA-binding domain in the interval arginine 109–glutamate 175.

It belongs to the universal ribosomal protein uS4 family. Part of the small subunit (SSU) processome, composed of more than 70 proteins and the RNA chaperone small nucleolar RNA (snoRNA) U3. Component of a heterotrimeric complex containing IMP3, IMP4 and MPHOSPH10. Interacts with MPHOSPH10.

It localises to the nucleus. The protein localises to the nucleolus. Component of the 60-80S U3 small nucleolar ribonucleoprotein (U3 snoRNP). Required for the early cleavages during pre-18S ribosomal RNA processing. Part of the small subunit (SSU) processome, first precursor of the small eukaryotic ribosomal subunit. During the assembly of the SSU processome in the nucleolus, many ribosome biogenesis factors, an RNA chaperone and ribosomal proteins associate with the nascent pre-rRNA and work in concert to generate RNA folding, modifications, rearrangements and cleavage as well as targeted degradation of pre-ribosomal RNA by the RNA exosome. The chain is U3 small nucleolar ribonucleoprotein protein IMP3 from Homo sapiens (Human).